The following is a 195-amino-acid chain: Imidazoleglycerol-phosphate dehydratase (195 aa).

This sequence belongs to the imidazoleglycerol-phosphate dehydratase family.

The protein resides in the cytoplasm. The enzyme catalyses D-erythro-1-(imidazol-4-yl)glycerol 3-phosphate = 3-(imidazol-4-yl)-2-oxopropyl phosphate + H2O. Its pathway is amino-acid biosynthesis; L-histidine biosynthesis; L-histidine from 5-phospho-alpha-D-ribose 1-diphosphate: step 6/9. In Cereibacter sphaeroides (strain ATCC 17023 / DSM 158 / JCM 6121 / CCUG 31486 / LMG 2827 / NBRC 12203 / NCIMB 8253 / ATH 2.4.1.) (Rhodobacter sphaeroides), this protein is Imidazoleglycerol-phosphate dehydratase.